We begin with the raw amino-acid sequence, 394 residues long: NAD(P)H-quinone oxidoreductase subunit H (394 aa).

The protein belongs to the complex I 49 kDa subunit family. As to quaternary structure, NDH-1 can be composed of about 15 different subunits; different subcomplexes with different compositions have been identified which probably have different functions.

The protein localises to the cellular thylakoid membrane. It carries out the reaction a plastoquinone + NADH + (n+1) H(+)(in) = a plastoquinol + NAD(+) + n H(+)(out). The catalysed reaction is a plastoquinone + NADPH + (n+1) H(+)(in) = a plastoquinol + NADP(+) + n H(+)(out). NDH-1 shuttles electrons from an unknown electron donor, via FMN and iron-sulfur (Fe-S) centers, to quinones in the respiratory and/or the photosynthetic chain. The immediate electron acceptor for the enzyme in this species is believed to be plastoquinone. Couples the redox reaction to proton translocation, and thus conserves the redox energy in a proton gradient. Cyanobacterial NDH-1 also plays a role in inorganic carbon-concentration. The polypeptide is NAD(P)H-quinone oxidoreductase subunit H (Microcystis aeruginosa (strain NIES-843 / IAM M-2473)).